The following is a 919-amino-acid chain: Isoleucine--tRNA ligase (919 aa).

A 'HIGH' region motif is present at residues 59–69; sequence PYANGHLHIGH. Glu570 contributes to the L-isoleucyl-5'-AMP binding site. The short motif at 611 to 615 is the 'KMSKS' region element; that stretch reads KMSKS. Residue Lys614 participates in ATP binding. Residues Cys893, Cys896, Cys908, and Cys911 each coordinate Zn(2+).

This sequence belongs to the class-I aminoacyl-tRNA synthetase family. IleS type 1 subfamily. In terms of assembly, monomer. Zn(2+) is required as a cofactor.

The protein localises to the cytoplasm. The catalysed reaction is tRNA(Ile) + L-isoleucine + ATP = L-isoleucyl-tRNA(Ile) + AMP + diphosphate. Its function is as follows. Catalyzes the attachment of isoleucine to tRNA(Ile). As IleRS can inadvertently accommodate and process structurally similar amino acids such as valine, to avoid such errors it has two additional distinct tRNA(Ile)-dependent editing activities. One activity is designated as 'pretransfer' editing and involves the hydrolysis of activated Val-AMP. The other activity is designated 'posttransfer' editing and involves deacylation of mischarged Val-tRNA(Ile). This chain is Isoleucine--tRNA ligase, found in Campylobacter curvus (strain 525.92).